The sequence spans 1342 residues: DNA-directed RNA polymerase subunit beta (1342 aa).

This sequence belongs to the RNA polymerase beta chain family. In terms of assembly, the RNAP catalytic core consists of 2 alpha, 1 beta, 1 beta' and 1 omega subunit. When a sigma factor is associated with the core the holoenzyme is formed, which can initiate transcription.

The catalysed reaction is RNA(n) + a ribonucleoside 5'-triphosphate = RNA(n+1) + diphosphate. Functionally, DNA-dependent RNA polymerase catalyzes the transcription of DNA into RNA using the four ribonucleoside triphosphates as substrates. This Klebsiella pneumoniae (strain 342) protein is DNA-directed RNA polymerase subunit beta.